The chain runs to 366 residues: Transmembrane protein 26 (366 aa).

The next 3 membrane-spanning stretches (helical) occupy residues 4–24, 36–56, and 64–84; these read LVLL…LVAV, YWLL…TLKF, and WLSP…WLLE. N-linked (GlcNAc...) asparagine glycosylation is present at N110. The next 5 helical transmembrane spans lie at 138-158, 176-196, 208-228, 258-278, and 282-302; these read MVCE…ILII, ELLL…TETL, VSGI…DLAV, IGLS…VLMI, and VINH…ALHF. Over residues 319 to 329 the composition is skewed to basic and acidic residues; sequence HPESPKPEHSG. Residues 319–366 form a disordered region; that stretch reads HPESPKPEHSGPDQPSESGPSEWEDASPEALPLRTSPVTSEESYPTTP. Positions 354-366 are enriched in polar residues; sequence SPVTSEESYPTTP.

The protein localises to the membrane. In Mus musculus (Mouse), this protein is Transmembrane protein 26 (Tmem26).